The sequence spans 59 residues: Chromatin protein Cren7 (59 aa).

This sequence belongs to the Cren7 family. Monomer. In terms of processing, methylated at multiple sites, to varying extents.

It localises to the chromosome. The protein localises to the cytoplasm. In terms of biological role, a chromatin protein, binds double-stranded DNA without sequence specificity. Constrains negative DNA supercoils. In Pyrobaculum arsenaticum (strain DSM 13514 / JCM 11321 / PZ6), this protein is Chromatin protein Cren7.